Here is a 320-residue protein sequence, read N- to C-terminus: MRQTKTGILLANLGTPDAPTPEAVKRYLKQFLSDRRVVDTSRLLWWPLLRGVILPLRSPRVAKLYASVWMEGGSPLMVYSRQQQQALAQRLPEMPVALGMSYGSPSLESAVDELLAEHVDHIVVLPLYPQFSCSTVGAVWDELARILARKRSIPGISFIRDYADNHDYINALANSVRASFAKHGEPDLLLLSYHGIPQRYADEGDDYPQRCRTTTRELASALGMAPEKVMMTFQSRFGREPWLMPYTDETLKMLGEKGVGHIQVMCPGFAADCLETLEEIAEQNREVFLGAGGKKYEYIPALNATPEHIEMMANLVAAYR.

Fe cation is bound by residues His-194 and Glu-275.

Belongs to the ferrochelatase family. As to quaternary structure, monomer.

Its subcellular location is the cytoplasm. The enzyme catalyses heme b + 2 H(+) = protoporphyrin IX + Fe(2+). The protein operates within porphyrin-containing compound metabolism; protoheme biosynthesis; protoheme from protoporphyrin-IX: step 1/1. Functionally, catalyzes the ferrous insertion into protoporphyrin IX. The sequence is that of Ferrochelatase from Escherichia coli (strain K12 / MC4100 / BW2952).